Consider the following 156-residue polypeptide: Small ribosomal subunit protein uS7 (156 aa).

The protein belongs to the universal ribosomal protein uS7 family. Part of the 30S ribosomal subunit. Contacts proteins S9 and S11.

One of the primary rRNA binding proteins, it binds directly to 16S rRNA where it nucleates assembly of the head domain of the 30S subunit. Is located at the subunit interface close to the decoding center, probably blocks exit of the E-site tRNA. This chain is Small ribosomal subunit protein uS7, found in Methylocella silvestris (strain DSM 15510 / CIP 108128 / LMG 27833 / NCIMB 13906 / BL2).